The following is a 168-amino-acid chain: Cytochrome c-type biogenesis protein CcmE (168 aa).

Over 1-7 (MTRKQRR) the chain is Cytoplasmic. A helical; Signal-anchor for type II membrane protein transmembrane segment spans residues 8–28 (LMLIGVCGAVLAVALGLVLWA). The Periplasmic portion of the chain corresponds to 29-168 (MRGTIVFFRS…SGEKPALRQQ (140 aa)). Positions 122 and 126 each coordinate heme. Residues 134 to 168 (ALKKQGHWQGEAKHPGGTAPAPQTASGEKPALRQQ) are disordered.

It belongs to the CcmE/CycJ family.

It is found in the cell inner membrane. In terms of biological role, heme chaperone required for the biogenesis of c-type cytochromes. Transiently binds heme delivered by CcmC and transfers the heme to apo-cytochromes in a process facilitated by CcmF and CcmH. The protein is Cytochrome c-type biogenesis protein CcmE of Methylobacterium nodulans (strain LMG 21967 / CNCM I-2342 / ORS 2060).